We begin with the raw amino-acid sequence, 1117 residues long: Protein rliB (1117 aa).

An N-terminal signal peptide occupies residues 1–23; the sequence is MKNINNKILKIFILFLAICSVKS. Asparagine 136, asparagine 195, asparagine 279, and asparagine 318 each carry an N-linked (GlcNAc...) asparagine glycan. Positions 266-392 constitute a G8 domain; that stretch reads STWSNNLVPQ…YHNSWTKLAS (127 aa). 2 PbH1 repeats span residues 522 to 544 and 545 to 567; these read VQKSYISDCVVTKSYYRCYTIHG and TNNLTLTRNVAFDVNGHCYYLED. Asparagine 547 and asparagine 605 each carry an N-linked (GlcNAc...) asparagine glycan. Residues 621–642 form a PbH1 3 repeat; sequence NAYNTIIGNSASGGWAGFSFPN. 6 N-linked (GlcNAc...) asparagine glycosylation sites follow: asparagine 728, asparagine 845, asparagine 1030, asparagine 1044, asparagine 1091, and asparagine 1107.

It belongs to the comF family.

The protein resides in the secreted. This Dictyostelium discoideum (Social amoeba) protein is Protein rliB (rliB).